The chain runs to 250 residues: Probable transcriptional regulatory protein RHA1_ro06891 (250 aa).

This sequence belongs to the TACO1 family.

The protein localises to the cytoplasm. The sequence is that of Probable transcriptional regulatory protein RHA1_ro06891 from Rhodococcus jostii (strain RHA1).